We begin with the raw amino-acid sequence, 130 residues long: S-adenosylmethionine decarboxylase proenzyme (130 aa).

Catalysis depends on Ser-63, which acts as the Schiff-base intermediate with substrate; via pyruvic acid. Pyruvic acid (Ser); by autocatalysis is present on Ser-63. The active-site Proton acceptor; for processing activity is His-68. Cys-83 serves as the catalytic Proton donor; for catalytic activity.

This sequence belongs to the prokaryotic AdoMetDC family. Type 1 subfamily. Heterotetramer of two alpha and two beta chains arranged as a dimer of alpha/beta heterodimers. Pyruvate serves as cofactor. Is synthesized initially as an inactive proenzyme. Formation of the active enzyme involves a self-maturation process in which the active site pyruvoyl group is generated from an internal serine residue via an autocatalytic post-translational modification. Two non-identical subunits are generated from the proenzyme in this reaction, and the pyruvate is formed at the N-terminus of the alpha chain, which is derived from the carboxyl end of the proenzyme. The post-translation cleavage follows an unusual pathway, termed non-hydrolytic serinolysis, in which the side chain hydroxyl group of the serine supplies its oxygen atom to form the C-terminus of the beta chain, while the remainder of the serine residue undergoes an oxidative deamination to produce ammonia and the pyruvoyl group blocking the N-terminus of the alpha chain.

The catalysed reaction is S-adenosyl-L-methionine + H(+) = S-adenosyl 3-(methylsulfanyl)propylamine + CO2. Its pathway is amine and polyamine biosynthesis; S-adenosylmethioninamine biosynthesis; S-adenosylmethioninamine from S-adenosyl-L-methionine: step 1/1. Catalyzes the decarboxylation of S-adenosylmethionine to S-adenosylmethioninamine (dcAdoMet), the propylamine donor required for the synthesis of the polyamines spermine and spermidine from the diamine putrescine. The sequence is that of S-adenosylmethionine decarboxylase proenzyme from Thermotoga petrophila (strain ATCC BAA-488 / DSM 13995 / JCM 10881 / RKU-1).